Here is a 335-residue protein sequence, read N- to C-terminus: tRNA N6-adenosine threonylcarbamoyltransferase (335 aa).

Fe cation-binding residues include H111 and H115. Substrate-binding positions include 134–138, D167, G180, and N270; that span reads LISGG. D298 serves as a coordination point for Fe cation.

The protein belongs to the KAE1 / TsaD family. Fe(2+) serves as cofactor.

It is found in the cytoplasm. It carries out the reaction L-threonylcarbamoyladenylate + adenosine(37) in tRNA = N(6)-L-threonylcarbamoyladenosine(37) in tRNA + AMP + H(+). Functionally, required for the formation of a threonylcarbamoyl group on adenosine at position 37 (t(6)A37) in tRNAs that read codons beginning with adenine. Is involved in the transfer of the threonylcarbamoyl moiety of threonylcarbamoyl-AMP (TC-AMP) to the N6 group of A37, together with TsaE and TsaB. TsaD likely plays a direct catalytic role in this reaction. The protein is tRNA N6-adenosine threonylcarbamoyltransferase of Nitrosococcus oceani (strain ATCC 19707 / BCRC 17464 / JCM 30415 / NCIMB 11848 / C-107).